The sequence spans 216 residues: Maintenance of carboxysome distribution protein A (216 aa).

Gly-16, Gly-17, Gly-19, Lys-20, Thr-21, Thr-22, and Gln-45 together coordinate ATP. Residue Thr-21 participates in Mg(2+) binding.

Belongs to the ParA family. McdA subfamily. Self-associates, associates with McdB.

The protein resides in the cytoplasm. It localises to the nucleoid. It carries out the reaction ATP + H2O = ADP + phosphate + H(+). Functionally, mcdA and McdB together mediate carboxysome positioning on the nucleoid and prevent their aggregation in the cell. McdA is an ATPase that forms dynamic gradients on the nucleoid in response to adapter protein McdB, which associates with carboxysomes. The interplay between McdA gradients on the nucleoid and McdB-bound carboxysomes result in the equal spacing of Cbs along the cell length. Its function is as follows. Incorrect positioning (aggregation) of carboxysomes results in reduced CO(2) fixation by encapsulated form 1 ribulose-1,5-bisphosphate carboxylase (RuBisCO, cbbL/cbbS), which leads to slower growth. In Halothiobacillus neapolitanus (strain ATCC 23641 / c2) (Thiobacillus neapolitanus), this protein is Maintenance of carboxysome distribution protein A.